The chain runs to 243 residues: UPF0758 protein Tery_2667 (243 aa).

In terms of domain architecture, MPN spans 113 to 235; it reads VVESPQAAAD…HSSLRQITNL (123 aa). Zn(2+)-binding residues include histidine 184, histidine 186, and aspartate 197. Residues 184–197 carry the JAMM motif motif; that stretch reads HNHPSGNVEPSPED.

This sequence belongs to the UPF0758 family.

This Trichodesmium erythraeum (strain IMS101) protein is UPF0758 protein Tery_2667.